A 566-amino-acid polypeptide reads, in one-letter code: MPYLLLFAMLFALNTPLAWAASCPDWTPQKAEAEAAQLQATLTGWDEHYHRQGIALVADELYDQSRQRLVHLQQCFGLAPSPSPLTSARGPLPHPVPHTGVDKLADRQAVARWMAGKTGVWVQPKFDGVAASLIYRQGQLVQLISRGDGLQGHDWSRHIPQLGAVTRQLPQAIDLHLQGELYLRLNEHVQAKAGSANARGTVAGLLARKQLTREQGNTIGLFVWGWPHGPERQADRLAQLAQLGFPDSQHYSIAVDTLEDAARWREHWYRSPLPFASDGVILRLGSRPPAERWQAKAPYWIAAWKYPYVQALAEVRDVRFRVGRTGRITPIAHVQPVTLDDRRITQVSLGSLARWQALDIRPGDQVAISLAGLTIPRLEHVVHRAVERQPLGAPAPGRHHALSCWQPSEGCEEQFIARLTWLSGKQGLALPRTGPGTWRRLVDAGLVTSMTDWLQLDAERLQQVPGISSLTAAQLLGSFDQARSRPFDQWLRGLGAPIGKHLQLTGGWQEMASRSAGQWQTVPDIGVKRSRQLVGFFAAAEVQAIATRLAESGIEGFSPPPERIEQ.

Lys125 functions as the N6-AMP-lysine intermediate in the catalytic mechanism.

This sequence belongs to the NAD-dependent DNA ligase family. LigB subfamily.

The enzyme catalyses NAD(+) + (deoxyribonucleotide)n-3'-hydroxyl + 5'-phospho-(deoxyribonucleotide)m = (deoxyribonucleotide)n+m + AMP + beta-nicotinamide D-nucleotide.. Functionally, catalyzes the formation of phosphodiester linkages between 5'-phosphoryl and 3'-hydroxyl groups in double-stranded DNA using NAD as a coenzyme and as the energy source for the reaction. The sequence is that of DNA ligase B from Pseudomonas putida (strain GB-1).